Reading from the N-terminus, the 91-residue chain is Small ribosomal subunit protein bS20 (91 aa).

It belongs to the bacterial ribosomal protein bS20 family.

In terms of biological role, binds directly to 16S ribosomal RNA. In Thermosipho melanesiensis (strain DSM 12029 / CIP 104789 / BI429), this protein is Small ribosomal subunit protein bS20.